A 412-amino-acid polypeptide reads, in one-letter code: Multidrug resistance protein MdtG (412 aa).

10 helical membrane-spanning segments follow: residues 20–40, 62–82, 96–116, 119–139, 150–170, 177–197, 225–245, 260–280, 294–314, and 382–402; these read LFVA…IMPF, LVFS…GGLA, LGMS…QFLI, ALLG…ATQI, TLST…GLLA, PVFF…LYFI, VLCL…IAPI, LAFI…MSAP, ILVA…LVQT, and TVFF…YWCL.

Belongs to the major facilitator superfamily. DHA1 family. MdtG (TC 2.A.1.2.20) subfamily.

It localises to the cell inner membrane. This Rahnella sp. (strain Y9602) protein is Multidrug resistance protein MdtG.